The following is a 906-amino-acid chain: Alanine--tRNA ligase, chloroplastic/mitochondrial (906 aa).

Residues 1 to 10 (MSAATERERL) show a composition bias toward basic and acidic residues. The tract at residues 1–22 (MSAATERERLTNANPNARGKDN) is disordered. Positions 589, 593, 691, and 695 each coordinate Zn(2+).

Belongs to the class-II aminoacyl-tRNA synthetase family. In terms of assembly, monomer. Zn(2+) is required as a cofactor.

The protein resides in the plastid. It is found in the chloroplast. Its subcellular location is the mitochondrion. The catalysed reaction is tRNA(Ala) + L-alanine + ATP = L-alanyl-tRNA(Ala) + AMP + diphosphate. Catalyzes the attachment of alanine to tRNA(Ala) in a two-step reaction: alanine is first activated by ATP to form Ala-AMP and then transferred to the acceptor end of tRNA(Ala). Also edits incorrectly charged tRNA(Ala) via its editing domain. The protein is Alanine--tRNA ligase, chloroplastic/mitochondrial of Ostreococcus lucimarinus (strain CCE9901).